The following is a 660-amino-acid chain: DNA primase (660 aa).

The CHC2-type zinc finger occupies 40–64 (CPFHKEKTPSFTVSPDKQFYYCFGC). The tract at residues 94 to 115 (GMEVPREQGRRDQKPRQPTDSP) is disordered. The segment covering 97–110 (VPREQGRRDQKPRQ) has biased composition (basic and acidic residues). A Toprim domain is found at 261–343 (DEIIVVEGYM…GRRARFLFLP (83 aa)). Mg(2+)-binding residues include glutamate 267, aspartate 311, and aspartate 313. Disordered regions lie at residues 425–449 (DPQQ…DPGY) and 476–519 (QAWK…APVE). Residues 428-442 (QVEQLAQQAPATSSM) show a composition bias toward polar residues. Residues 488-498 (PWSDKPWDKNR) show a composition bias toward basic and acidic residues.

It belongs to the DnaG primase family. In terms of assembly, monomer. Interacts with DnaB. Zn(2+) is required as a cofactor. Mg(2+) serves as cofactor.

The enzyme catalyses ssDNA + n NTP = ssDNA/pppN(pN)n-1 hybrid + (n-1) diphosphate.. Functionally, RNA polymerase that catalyzes the synthesis of short RNA molecules used as primers for DNA polymerase during DNA replication. This is DNA primase from Pseudomonas putida (strain ATCC 47054 / DSM 6125 / CFBP 8728 / NCIMB 11950 / KT2440).